The sequence spans 397 residues: Class V chitinase CHIT5 (397 aa).

The first 18 residues, 1 to 18 (MIIKLLVALIHYLHETMA), serve as a signal peptide directing secretion. The GH18 domain occupies 54–397 (GVRAAYWPAW…SKQASNAWGY (344 aa)). 2 N-linked (GlcNAc...) asparagine glycosylation sites follow: Asn128 and Asn147. The Proton donor role is filled by Glu166. Asn193, Asn209, Asn247, and Asn261 each carry an N-linked (GlcNAc...) asparagine glycan.

The protein belongs to the glycosyl hydrolase 18 family. Chitinase class V subfamily.

The catalysed reaction is Random endo-hydrolysis of N-acetyl-beta-D-glucosaminide (1-&gt;4)-beta-linkages in chitin and chitodextrins.. The protein operates within glycan degradation; chitin degradation. Functionally, possesses chitinase activity in vitro toward glycol chitin, carboxymethyl-chitin, colloidal chitin, and the chitin oligosaccharides (N-acetylglucosamine) (GlcNAc)6 and (GlcNAc)5. Hydrolyzes (GlcNAc)6 into (GlcNAc)4 and (GlcNAc)2, or two (GlcNAc)3 molecules. Has the capacity to inhibit hyphal growth of the fungus Trichoderma viride in an agar-plate bioassay. Involved in symbiotic signaling. Required for root hair infection threads (ITs) elongation and nodule development. Possesses Nod factor (NF) hydrolase activity. NFs are lipo-chitooligosaccharide signaling molecules produced by nitrogen-fixing rhizobia to initiate nodulation (symbiosis) on the roots of legumes. Modulates NF levels and signaling to complete transition of infected nodules to functional nitrogen-fixing organs. This chain is Class V chitinase CHIT5, found in Lotus japonicus (Lotus corniculatus var. japonicus).